The following is a 244-amino-acid chain: Gasdermin-like protein rcd-1-2 (244 aa).

A disordered region spans residues Met1–Met22.

It belongs to the gasdermin family. In terms of assembly, heterooligomer; the heterooligomer with rcd-1-1 forms a ring-shaped pore complex when inserted in the membrane.

Its subcellular location is the cytoplasm. The protein resides in the cell membrane. Functionally, gasdermin-like protein involved in heterokaryon incompatibility, a process that ensures that during spontaneous vegetative cell fusion, only compatible cells from the same colony survive (non-self-recognition). In N.crassa, the rcd-1 locus exists as 2 incompatible alleles, rcd-1-1 (AC Q7SBA0) and rcd-1-2 (this entry). During the allorecognition process, forms a heterooligomer with rcd-1-1, thereby forming a functional gasdermin-like complex that binds to membranes and forms pores, triggering cell death. Binds negatively charged phospholipids, such as cardiolipin and phosphatidylserine. Also binds to phosphoinositides, preferentially to phosphatidylinositol-3-phosphate (PtdIns-3-P), PtdIns-5-P and PtdIns-3,5-P2. This Neurospora crassa protein is Gasdermin-like protein rcd-1-2.